We begin with the raw amino-acid sequence, 510 residues long: Ribonuclease Y (510 aa).

A helical membrane pass occupies residues 2-22 (IYIIFSSIFAGFILGFLVRVF). In terms of domain architecture, KH spans 198–258 (TVASVELPND…IRKELAKRTL (61 aa)). The HD domain occupies 324-419 (VLSHSKETAI…VQIADAISAS (96 aa)).

It belongs to the RNase Y family.

The protein localises to the cell membrane. Functionally, endoribonuclease that initiates mRNA decay. In Borrelia garinii subsp. bavariensis (strain ATCC BAA-2496 / DSM 23469 / PBi) (Borreliella bavariensis), this protein is Ribonuclease Y.